Consider the following 90-residue polypeptide: Small ribosomal subunit protein uS15c (90 aa).

This sequence belongs to the universal ribosomal protein uS15 family. As to quaternary structure, part of the 30S ribosomal subunit.

The protein resides in the plastid. It is found in the chloroplast. The protein is Small ribosomal subunit protein uS15c (rps15) of Acorus calamus (Sweet flag).